Here is a 315-residue protein sequence, read N- to C-terminus: Methenyltetrahydromethanopterin cyclohydrolase (315 aa).

The protein belongs to the MCH family.

It localises to the cytoplasm. It carries out the reaction 5,10-methenyl-5,6,7,8-tetrahydromethanopterin + H2O = N(5)-formyl-5,6,7,8-tetrahydromethanopterin + H(+). Its pathway is one-carbon metabolism; methanogenesis from CO(2); 5,10-methenyl-5,6,7,8-tetrahydromethanopterin from CO(2): step 3/3. Catalyzes the reversible interconversion of 5-formyl-H(4)MPT to methenyl-H(4)MPT(+). The polypeptide is Methenyltetrahydromethanopterin cyclohydrolase (Methanoculleus marisnigri (strain ATCC 35101 / DSM 1498 / JR1)).